A 67-amino-acid polypeptide reads, in one-letter code: MPKMKTKSAAKKRFKITASGKVKAAAAGKRHGMIKRTNKFIRDARGTMVLAEPDGRKVVKNYLPNGL.

The protein belongs to the bacterial ribosomal protein bL35 family.

The protein is Large ribosomal subunit protein bL35 of Rhizobium etli (strain ATCC 51251 / DSM 11541 / JCM 21823 / NBRC 15573 / CFN 42).